We begin with the raw amino-acid sequence, 607 residues long: Pyruvate decarboxylase 1 (607 aa).

The substrate site is built by Asp69 and His156. The interval 434-516 (DSWFNCQKLK…FLINNGGYTI (83 aa)) is thiamine pyrophosphate binding. Residues Asp484, Asn511, and Gly513 each contribute to the Mg(2+) site. Glu517 is a substrate binding site.

Belongs to the TPP enzyme family. In terms of assembly, homotetramer. A metal cation serves as cofactor. Requires thiamine diphosphate as cofactor. In terms of tissue distribution, highly expressed in seeds, and at lower levels in roots and siliques.

The enzyme catalyses a 2-oxocarboxylate + H(+) = an aldehyde + CO2. Functionally, may play a role in ethanolic fermentation during anoxia. This is Pyruvate decarboxylase 1 (PDC1) from Arabidopsis thaliana (Mouse-ear cress).